Here is a 215-residue protein sequence, read N- to C-terminus: MITIALPKGALLSDSIALFKQIGLDFTAFLDSSNRQLQISDPTNTAKALLVRAQDVPVYVEYGQAQLGIVGYDVLLEKTPKVANLADLKFGACRMSVAVPAKSPYRSSIELPPNGRVASKFVHCAEDYFRRLDIPVEIIPLYGSVELGPITGMSDAIVDLVSTGRTLRENGLVEIDVLFESTARLIAHPLSYRLNLDHLDQWVNKLRQINLKPVA.

The protein belongs to the ATP phosphoribosyltransferase family. Short subfamily. As to quaternary structure, heteromultimer composed of HisG and HisZ subunits.

The protein resides in the cytoplasm. It catalyses the reaction 1-(5-phospho-beta-D-ribosyl)-ATP + diphosphate = 5-phospho-alpha-D-ribose 1-diphosphate + ATP. It participates in amino-acid biosynthesis; L-histidine biosynthesis; L-histidine from 5-phospho-alpha-D-ribose 1-diphosphate: step 1/9. Its function is as follows. Catalyzes the condensation of ATP and 5-phosphoribose 1-diphosphate to form N'-(5'-phosphoribosyl)-ATP (PR-ATP). Has a crucial role in the pathway because the rate of histidine biosynthesis seems to be controlled primarily by regulation of HisG enzymatic activity. This is ATP phosphoribosyltransferase from Gloeothece citriformis (strain PCC 7424) (Cyanothece sp. (strain PCC 7424)).